The chain runs to 85 residues: UPF0297 protein CD630_12830 (85 aa).

It belongs to the UPF0297 family.

This Clostridioides difficile (strain 630) (Peptoclostridium difficile) protein is UPF0297 protein CD630_12830.